A 225-amino-acid polypeptide reads, in one-letter code: Uridylate kinase (225 aa).

9–10 is a binding site for ATP; it reads GS. Position 46 (glycine 46) interacts with UMP. ATP-binding residues include glycine 47 and arginine 51. UMP-binding positions include aspartate 67 and 115-121; that span reads THPAHTT. The ATP site is built by threonine 141, asparagine 142, tyrosine 147, and aspartate 150.

The protein belongs to the UMP kinase family. Homohexamer.

It localises to the cytoplasm. It carries out the reaction UMP + ATP = UDP + ADP. It participates in pyrimidine metabolism; CTP biosynthesis via de novo pathway; UDP from UMP (UMPK route): step 1/1. Inhibited by UTP. Its function is as follows. Catalyzes the reversible phosphorylation of UMP to UDP. The sequence is that of Uridylate kinase from Methanococcus maripaludis (strain C7 / ATCC BAA-1331).